The primary structure comprises 241 residues: Proteasome subunit beta type-6 (241 aa).

A propeptide spanning residues 1-19 (MATIASEYSSEASNTPIEH) is cleaved from the precursor.

Belongs to the peptidase T1B family. In terms of assembly, the 26S proteasome consists of a 20S proteasome core and two 19S regulatory subunits. The 20S proteasome core is composed of 28 subunits that are arranged in four stacked rings, resulting in a barrel-shaped structure. The two end rings are each formed by seven alpha subunits, and the two central rings are each formed by seven beta subunits. The catalytic chamber with the active sites is on the inside of the barrel.

It is found in the cytoplasm. The protein localises to the nucleus. Functionally, non-catalytic component of the proteasome which degrades poly-ubiquitinated proteins in the cytoplasm and in the nucleus. It is essential for the regulated turnover of proteins and for the removal of misfolded proteins. The proteasome is a multicatalytic proteinase complex that is characterized by its ability to cleave peptides with Arg, Phe, Tyr, Leu, and Glu adjacent to the leaving group at neutral or slightly basic pH. It has an ATP-dependent proteolytic activity. The chain is Proteasome subunit beta type-6 (PRE7) from Saccharomyces cerevisiae (strain ATCC 204508 / S288c) (Baker's yeast).